The sequence spans 67 residues: Kappa-scoloptoxin(04)-Ssd1b (67 aa).

The signal sequence occupies residues 1 to 24; it reads MKKTCVVSVFLVLLLLKFHDLSMG. Positions 25-36 are excised as a propeptide; sequence EEISPLKKVARR. Intrachain disulfides connect cysteine 44/cysteine 55 and cysteine 49/cysteine 62.

In terms of tissue distribution, expressed by the venom gland.

The protein resides in the secreted. The sequence is that of Kappa-scoloptoxin(04)-Ssd1b from Scolopendra dehaani (Thai centipede).